The sequence spans 242 residues: Ditrans,polycis-undecaprenyl-diphosphate synthase ((2E,6E)-farnesyl-diphosphate specific) (242 aa).

Residue Asp21 is part of the active site. Residue Asp21 participates in Mg(2+) binding. Residues 22-25 (GNGR), Trp26, Arg34, His38, and 66-68 (SSE) contribute to the substrate site. Residue Asn69 is the Proton acceptor of the active site. Substrate-binding positions include Trp70, Arg72, Arg189, and 195–197 (RIS). Residue Glu208 participates in Mg(2+) binding.

It belongs to the UPP synthase family. In terms of assembly, homodimer. Mg(2+) serves as cofactor.

The catalysed reaction is 8 isopentenyl diphosphate + (2E,6E)-farnesyl diphosphate = di-trans,octa-cis-undecaprenyl diphosphate + 8 diphosphate. Functionally, catalyzes the sequential condensation of isopentenyl diphosphate (IPP) with (2E,6E)-farnesyl diphosphate (E,E-FPP) to yield (2Z,6Z,10Z,14Z,18Z,22Z,26Z,30Z,34E,38E)-undecaprenyl diphosphate (di-trans,octa-cis-UPP). UPP is the precursor of glycosyl carrier lipid in the biosynthesis of bacterial cell wall polysaccharide components such as peptidoglycan and lipopolysaccharide. In Haemophilus ducreyi (strain 35000HP / ATCC 700724), this protein is Ditrans,polycis-undecaprenyl-diphosphate synthase ((2E,6E)-farnesyl-diphosphate specific).